A 252-amino-acid polypeptide reads, in one-letter code: L-aspartate dehydrogenase (252 aa).

Residues alanine 119 and asparagine 175 each coordinate NAD(+). Histidine 203 is an active-site residue.

Belongs to the L-aspartate dehydrogenase family.

It catalyses the reaction L-aspartate + NADP(+) + H2O = oxaloacetate + NH4(+) + NADPH + H(+). The catalysed reaction is L-aspartate + NAD(+) + H2O = oxaloacetate + NH4(+) + NADH + H(+). Its pathway is cofactor biosynthesis; NAD(+) biosynthesis; iminoaspartate from L-aspartate (dehydrogenase route): step 1/1. Functionally, specifically catalyzes the NAD or NADP-dependent dehydrogenation of L-aspartate to iminoaspartate. In Methanospirillum hungatei JF-1 (strain ATCC 27890 / DSM 864 / NBRC 100397 / JF-1), this protein is L-aspartate dehydrogenase.